The sequence spans 66 residues: Large ribosomal subunit protein bL35 (66 aa).

Residues 1-46 (MPKMKTHRASAKRFKRTGNGGLKRHHAFTGHRFHGKTKKQRRHLRK) are compositionally biased toward basic residues. A disordered region spans residues 1-50 (MPKMKTHRASAKRFKRTGNGGLKRHHAFTGHRFHGKTKKQRRHLRKAAMV).

Belongs to the bacterial ribosomal protein bL35 family.

The protein is Large ribosomal subunit protein bL35 of Lactobacillus delbrueckii subsp. bulgaricus (strain ATCC 11842 / DSM 20081 / BCRC 10696 / JCM 1002 / NBRC 13953 / NCIMB 11778 / NCTC 12712 / WDCM 00102 / Lb 14).